The sequence spans 511 residues: Kinesin-like protein 8 (511 aa).

The 352-residue stretch at 5 to 356 folds into the Kinesin motor domain; it reads NVRVIVRVRP…LRYSEAARRI (352 aa). Residue 107–114 participates in ATP binding; that stretch reads GQKGTGKT. 4 positions are modified to phosphoserine: serine 278, serine 279, serine 284, and serine 456. A coiled-coil region spans residues 373–489; the sequence is EGELDDILTT…KLVKSQLHDY (117 aa).

It belongs to the TRAFAC class myosin-kinesin ATPase superfamily. Kinesin family.

The protein resides in the cytoplasm. The protein localises to the cytoskeleton. The polypeptide is Kinesin-like protein 8 (klp8) (Schizosaccharomyces pombe (strain 972 / ATCC 24843) (Fission yeast)).